Reading from the N-terminus, the 379-residue chain is Alanine racemase (379 aa).

K40 (proton acceptor; specific for D-alanine) is an active-site residue. Position 40 is an N6-(pyridoxal phosphate)lysine (K40). Substrate is bound at residue R138. Y267 serves as the catalytic Proton acceptor; specific for L-alanine. M315 is a substrate binding site.

Belongs to the alanine racemase family. Requires pyridoxal 5'-phosphate as cofactor.

The catalysed reaction is L-alanine = D-alanine. It functions in the pathway amino-acid biosynthesis; D-alanine biosynthesis; D-alanine from L-alanine: step 1/1. Functionally, catalyzes the interconversion of L-alanine and D-alanine. May also act on other amino acids. The chain is Alanine racemase (alr) from Halothermothrix orenii (strain H 168 / OCM 544 / DSM 9562).